The sequence spans 228 residues: Calcyclin-binding protein (228 aa).

The residue at position 2 (A2) is an N-acetylalanine. The tract at residues 2–80 (ASEELQKDLE…YTVKISNYGW (79 aa)) is interaction with SIAH1. At S3 the chain carries Phosphoserine. N6-acetyllysine occurs at positions 8 and 19. The residue at position 34 (S34) is a Phosphoserine. Residues 73-167 (VKISNYGWDQ…VENTRWDYLT (95 aa)) form the CS domain. The tract at residues 73-228 (VKISNYGWDQ…EKQAKGDTEF (156 aa)) is interaction with SKP1. An N6-acetyllysine mark is found at K85 and K118. An interaction with S100A6 region spans residues 154 to 228 (CRKKVENTRW…EKQAKGDTEF (75 aa)). In terms of domain architecture, SGS spans 168–228 (QVEKECKEKE…EKQAKGDTEF (61 aa)).

As to quaternary structure, component of some large E3 complex at least composed of UBE2D1, SIAH1, CACYBP/SIP, SKP1, APC and TBL1X. Interacts directly with SIAH1, SIAH2 and SKP1. Interacts with protein of the S100 family S100A1, S100A6, S100B, S100P and S100A12 in a calcium-dependent manner. In terms of processing, phosphorylated on serine residues. Phosphorylated upon induction by RA or at high calcium concentrations.

It localises to the nucleus. The protein resides in the cytoplasm. In terms of biological role, may be involved in calcium-dependent ubiquitination and subsequent proteasomal degradation of target proteins. Probably serves as a molecular bridge in ubiquitin E3 complexes. Participates in the ubiquitin-mediated degradation of beta-catenin (CTNNB1). In Macaca fascicularis (Crab-eating macaque), this protein is Calcyclin-binding protein (CACYBP).